A 177-amino-acid polypeptide reads, in one-letter code: R-phycoerythrin beta chain (177 aa).

Residues C50 and C61 each coordinate phycourobilin. An N4-methylasparagine modification is found at N72. C82 and C158 together coordinate (2R,3E)-phycoerythrobilin.

It belongs to the phycobiliprotein family. As to quaternary structure, heterodimer of an alpha and a beta chain. Contains two covalently linked phycoerythrobilin chromophores and one covalently linked phycourobilin chromophore.

It is found in the plastid. The protein localises to the chloroplast thylakoid membrane. In terms of biological role, light-harvesting photosynthetic bile pigment-protein from the phycobiliprotein complex. The polypeptide is R-phycoerythrin beta chain (cpeB) (Lophosiphonia boldii (Red alga)).